Here is a 941-residue protein sequence, read N- to C-terminus: Isoleucine--tRNA ligase (941 aa).

The 'HIGH' region motif lies at 59–69; the sequence is PYANGNIHIGH. Glutamate 562 provides a ligand contact to L-isoleucyl-5'-AMP. The short motif at 603-607 is the 'KMSKS' region element; the sequence is KMSKS. Lysine 606 provides a ligand contact to ATP. Residues cysteine 904, cysteine 907, cysteine 924, and cysteine 927 each contribute to the Zn(2+) site.

The protein belongs to the class-I aminoacyl-tRNA synthetase family. IleS type 1 subfamily. In terms of assembly, monomer. Zn(2+) serves as cofactor.

It localises to the cytoplasm. The enzyme catalyses tRNA(Ile) + L-isoleucine + ATP = L-isoleucyl-tRNA(Ile) + AMP + diphosphate. Functionally, catalyzes the attachment of isoleucine to tRNA(Ile). As IleRS can inadvertently accommodate and process structurally similar amino acids such as valine, to avoid such errors it has two additional distinct tRNA(Ile)-dependent editing activities. One activity is designated as 'pretransfer' editing and involves the hydrolysis of activated Val-AMP. The other activity is designated 'posttransfer' editing and involves deacylation of mischarged Val-tRNA(Ile). The sequence is that of Isoleucine--tRNA ligase from Haemophilus influenzae (strain PittEE).